A 367-amino-acid chain; its full sequence is DNA replication and repair protein RecF (367 aa).

30 to 37 (GANGSGKT) lines the ATP pocket.

It belongs to the RecF family.

The protein resides in the cytoplasm. In terms of biological role, the RecF protein is involved in DNA metabolism; it is required for DNA replication and normal SOS inducibility. RecF binds preferentially to single-stranded, linear DNA. It also seems to bind ATP. This chain is DNA replication and repair protein RecF, found in Pseudomonas fluorescens (strain SBW25).